The following is a 373-amino-acid chain: MEFKLKHKDGMARVCEITTAHSTFLTPVFMPVGTVGAVKSLDANDMKNELDAKIILANTYHMYLRPTSKVVKDFGGLHGFTKFDRSFLTDSGGFQAFSLSKNSKHFNEGIEFKSHIDGSRHLFTPKSVLDTQYDFHSDIMMILDDLVALPATKERVKISVDRTILWAKEAITYHKSMQNKGIGIGQNIFGIIQGGTDYEERKRCALSLNEMPFDGLAIGGLSVGEENALMYETVQNLNPYLDENRPRYLMGVGTPEDLVENVERGVDMFDCVMPTRNARNGTFFTSFGKFNIKKAEFINDHEAIGPACSCYTCRNFSRGYLNHLFKAKELTFFRLASLHNLHYYLELAREMREAILNNSFTQFKKNFYHLRGK.

Catalysis depends on Asp90, which acts as the Proton acceptor. Residues 90–94, Asp144, Gln193, and Gly220 contribute to the substrate site; that span reads DSGGF. The RNA binding stretch occupies residues 251-257; the sequence is GVGTPED. The active-site Nucleophile is the Asp270. Positions 275–279 are RNA binding; important for wobble base 34 recognition; the sequence is TRNAR. Zn(2+) contacts are provided by Cys308, Cys310, Cys313, and His339.

Belongs to the queuine tRNA-ribosyltransferase family. Homodimer. Within each dimer, one monomer is responsible for RNA recognition and catalysis, while the other monomer binds to the replacement base PreQ1. Zn(2+) serves as cofactor.

The catalysed reaction is 7-aminomethyl-7-carbaguanine + guanosine(34) in tRNA = 7-aminomethyl-7-carbaguanosine(34) in tRNA + guanine. The protein operates within tRNA modification; tRNA-queuosine biosynthesis. Its function is as follows. Catalyzes the base-exchange of a guanine (G) residue with the queuine precursor 7-aminomethyl-7-deazaguanine (PreQ1) at position 34 (anticodon wobble position) in tRNAs with GU(N) anticodons (tRNA-Asp, -Asn, -His and -Tyr). Catalysis occurs through a double-displacement mechanism. The nucleophile active site attacks the C1' of nucleotide 34 to detach the guanine base from the RNA, forming a covalent enzyme-RNA intermediate. The proton acceptor active site deprotonates the incoming PreQ1, allowing a nucleophilic attack on the C1' of the ribose to form the product. After dissociation, two additional enzymatic reactions on the tRNA convert PreQ1 to queuine (Q), resulting in the hypermodified nucleoside queuosine (7-(((4,5-cis-dihydroxy-2-cyclopenten-1-yl)amino)methyl)-7-deazaguanosine). In Campylobacter jejuni subsp. doylei (strain ATCC BAA-1458 / RM4099 / 269.97), this protein is Queuine tRNA-ribosyltransferase.